A 180-amino-acid polypeptide reads, in one-letter code: uncharacterized protein (180 aa).

Positions 3 to 33 (QQQSNNSNDNKEQLDRVIESLNRVNSETKQI) form a coiled coil.

This is an uncharacterized protein from Acanthamoeba polyphaga (Amoeba).